A 301-amino-acid chain; its full sequence is Probable cyclic nucleotide phosphodiesterase RER_40650 (301 aa).

Aspartate 20, histidine 22, aspartate 61, asparagine 95, histidine 167, histidine 205, and histidine 207 together coordinate Fe cation. Residues histidine 22, aspartate 61, and 95–96 each bind AMP; that span reads NH. Histidine 207 contributes to the AMP binding site.

The protein belongs to the cyclic nucleotide phosphodiesterase class-III family. Fe(2+) is required as a cofactor.

In Rhodococcus erythropolis (strain PR4 / NBRC 100887), this protein is Probable cyclic nucleotide phosphodiesterase RER_40650.